Consider the following 332-residue polypeptide: Anthranilate phosphoribosyltransferase (332 aa).

5-phospho-alpha-D-ribose 1-diphosphate-binding positions include G79, 82–83, T87, 89–92, 107–115, and S119; these read GD, NIST, and KHGNRSVSS. G79 serves as a coordination point for anthranilate. Position 91 (S91) interacts with Mg(2+). N110 serves as a coordination point for anthranilate. Residue R165 coordinates anthranilate. Residues D223 and E224 each coordinate Mg(2+).

Belongs to the anthranilate phosphoribosyltransferase family. Homodimer. It depends on Mg(2+) as a cofactor.

It catalyses the reaction N-(5-phospho-beta-D-ribosyl)anthranilate + diphosphate = 5-phospho-alpha-D-ribose 1-diphosphate + anthranilate. It functions in the pathway amino-acid biosynthesis; L-tryptophan biosynthesis; L-tryptophan from chorismate: step 2/5. Its function is as follows. Catalyzes the transfer of the phosphoribosyl group of 5-phosphorylribose-1-pyrophosphate (PRPP) to anthranilate to yield N-(5'-phosphoribosyl)-anthranilate (PRA). The sequence is that of Anthranilate phosphoribosyltransferase from Vibrio vulnificus (strain YJ016).